We begin with the raw amino-acid sequence, 557 residues long: Dihydroxy-acid dehydratase (557 aa).

Asp-78 serves as a coordination point for Mg(2+). [2Fe-2S] cluster is bound at residue Cys-119. Positions 120 and 121 each coordinate Mg(2+). Lys-121 is subject to N6-carboxylysine. Cys-192 contacts [2Fe-2S] cluster. A Mg(2+)-binding site is contributed by Glu-443. The active-site Proton acceptor is Ser-469.

The protein belongs to the IlvD/Edd family. As to quaternary structure, homodimer. Requires [2Fe-2S] cluster as cofactor. Mg(2+) serves as cofactor.

The enzyme catalyses (2R)-2,3-dihydroxy-3-methylbutanoate = 3-methyl-2-oxobutanoate + H2O. The catalysed reaction is (2R,3R)-2,3-dihydroxy-3-methylpentanoate = (S)-3-methyl-2-oxopentanoate + H2O. It functions in the pathway amino-acid biosynthesis; L-isoleucine biosynthesis; L-isoleucine from 2-oxobutanoate: step 3/4. It participates in amino-acid biosynthesis; L-valine biosynthesis; L-valine from pyruvate: step 3/4. In terms of biological role, functions in the biosynthesis of branched-chain amino acids. Catalyzes the dehydration of (2R,3R)-2,3-dihydroxy-3-methylpentanoate (2,3-dihydroxy-3-methylvalerate) into 2-oxo-3-methylpentanoate (2-oxo-3-methylvalerate) and of (2R)-2,3-dihydroxy-3-methylbutanoate (2,3-dihydroxyisovalerate) into 2-oxo-3-methylbutanoate (2-oxoisovalerate), the penultimate precursor to L-isoleucine and L-valine, respectively. In Sulfurihydrogenibium sp. (strain YO3AOP1), this protein is Dihydroxy-acid dehydratase.